Here is a 244-residue protein sequence, read N- to C-terminus: Thiol S-methyltransferase TMT1B (244 aa).

The first 23 residues, 1–23 (MDVLVPLLQLLVLLLTLPLHLLA), serve as a signal peptide directing secretion.

The protein belongs to the methyltransferase superfamily. In terms of tissue distribution, highly expressed in liver and kidney. No expression in testis, heart, lung, brain, spleen or cultured fibroblasts.

It is found in the endoplasmic reticulum membrane. The protein localises to the lipid droplet. Its subcellular location is the microsome. The protein resides in the cytoplasm. It localises to the cytosol. The enzyme catalyses a thiol + S-adenosyl-L-methionine = a methyl thioether + S-adenosyl-L-homocysteine + H(+). Functionally, thiol S-methyltransferase that catalyzes the transfer of a methyl group from S-adenosyl-L-methionine to alkyl and phenolic thiol-containing acceptor substrates. Together with TMT1B accounts for most of S-thiol methylation activity in the endoplasmic reticulum of hepatocytes. Selectively methylates S-centered nucleophiles from metabolites such as hydrogen sulfide and dithiothreitol. In Rattus norvegicus (Rat), this protein is Thiol S-methyltransferase TMT1B (Tmt1b).